Here is a 150-residue protein sequence, read N- to C-terminus: MKKLLSLVIIVVGIVADQIFKNWIVANIQLGDTEKIWPNVLSLTYIKNDGAAWSSFSGQQWFFLILTPIVLVVALWFLWKKMAQNWYFIGLTLIIAGALGNFIDRIRQGFVVDMFQTEFINFPIFNIADILLSVGFVLLFIAILTDKETK.

The next 3 helical transmembrane spans lie at 5 to 25, 59 to 79, and 83 to 103; these read LSLVIIVVGIVADQIFKNWIV, QQWFFLILTPIVLVVALWFLW, and AQNWYFIGLTLIIAGALGNFI. Catalysis depends on residues Asp113 and Asp129. The helical transmembrane segment at 124-144 threads the bilayer; that stretch reads IFNIADILLSVGFVLLFIAIL.

The protein belongs to the peptidase A8 family.

Its subcellular location is the cell membrane. The enzyme catalyses Release of signal peptides from bacterial membrane prolipoproteins. Hydrolyzes -Xaa-Yaa-Zaa-|-(S,diacylglyceryl)Cys-, in which Xaa is hydrophobic (preferably Leu), and Yaa (Ala or Ser) and Zaa (Gly or Ala) have small, neutral side chains.. The protein operates within protein modification; lipoprotein biosynthesis (signal peptide cleavage). This protein specifically catalyzes the removal of signal peptides from prolipoproteins. The sequence is that of Lipoprotein signal peptidase from Lactococcus lactis subsp. lactis (strain IL1403) (Streptococcus lactis).